The following is a 185-amino-acid chain: Probable chorismate pyruvate-lyase (185 aa).

Residues arginine 75, leucine 113, and glutamate 174 each coordinate substrate.

Belongs to the UbiC family.

It is found in the cytoplasm. The catalysed reaction is chorismate = 4-hydroxybenzoate + pyruvate. The protein operates within cofactor biosynthesis; ubiquinone biosynthesis. Functionally, removes the pyruvyl group from chorismate, with concomitant aromatization of the ring, to provide 4-hydroxybenzoate (4HB) for the ubiquinone pathway. The protein is Probable chorismate pyruvate-lyase of Aromatoleum aromaticum (strain DSM 19018 / LMG 30748 / EbN1) (Azoarcus sp. (strain EbN1)).